Here is a 641-residue protein sequence, read N- to C-terminus: Chaperone protein HtpG (641 aa).

The segment at 1-351 (MTQSVHAETH…SNDLPLNVSR (351 aa)) is a; substrate-binding. Residues 352-568 (EILQDNKVTV…AHGMSTQMIK (217 aa)) form a b region. The c stretch occupies residues 569 to 641 (LMRAAGQPVP…SRINRLLLQA (73 aa)).

It belongs to the heat shock protein 90 family. Homodimer.

It localises to the cytoplasm. In terms of biological role, molecular chaperone. Has ATPase activity. The sequence is that of Chaperone protein HtpG from Aeromonas hydrophila subsp. hydrophila (strain ATCC 7966 / DSM 30187 / BCRC 13018 / CCUG 14551 / JCM 1027 / KCTC 2358 / NCIMB 9240 / NCTC 8049).